The following is a 229-amino-acid chain: Germin-like protein 12-2 (229 aa).

A signal peptide spans 1–22 (MASSNFFLLTALIALVATQAMA). Cys-32 and Cys-47 are oxidised to a cystine. The region spanning 62–217 (ANLDKPMDTT…AFQVDKKAVD (156 aa)) is the Cupin type-1 domain. Residue Asn-78 is glycosylated (N-linked (GlcNAc...) asparagine). Positions 111, 113, 118, and 162 each coordinate Mn(2+).

The protein belongs to the germin family. As to quaternary structure, oligomer (believed to be a pentamer but probably hexamer).

It is found in the secreted. It localises to the extracellular space. The protein resides in the apoplast. Functionally, may play a role in plant defense. Probably has no oxalate oxidase activity even if the active site is conserved. In Oryza sativa subsp. japonica (Rice), this protein is Germin-like protein 12-2.